A 359-amino-acid polypeptide reads, in one-letter code: WAT1-related protein At4g16620 (359 aa).

Transmembrane regions (helical) follow at residues 5-25 (ETLIEAGIIGGLAGAQVIYAG), 41-61 (LLIVILCTFASVLLITPLAFL), 77-97 (IKLVLVALAGVTLFQGLFLEG), 105-125 (MATAMPNLCPAFIFVIAWAAG), 143-163 (TVLCVMGALIMSLMHSTTATL), 183-203 (ILGCLYLLLAICGLSSSIVLQ), 206-226 (ILAEFPAPISMFSMVSLMGGI), 246-266 (VIGLGHLVGYAILGGLVSGGG), 279-299 (PVIVSLFSPIATVVCVVVSAF), and 305-325 (FNLGSFAGMALMFGGLYFVLW). Residues 30–154 (LSQLLSLGID…LCVMGALIMS (125 aa)) form the EamA 1 domain. The EamA 2 domain maps to 206–324 (ILAEFPAPIS…LMFGGLYFVL (119 aa)).

This sequence belongs to the drug/metabolite transporter (DMT) superfamily. Plant drug/metabolite exporter (P-DME) (TC 2.A.7.4) family.

It localises to the membrane. In Arabidopsis thaliana (Mouse-ear cress), this protein is WAT1-related protein At4g16620.